Reading from the N-terminus, the 294-residue chain is Equatorin (294 aa).

The N-terminal stretch at Met1–Ser14 is a signal peptide. Residues Leu15–Lys181 lie on the Vesicular side of the membrane. N-linked (GlcNAc...) asparagine glycosylation is present at Asn76. The segment at Lys107–Arg126 is disordered. Residue Asn143 is glycosylated (N-linked (GlcNAc...) asparagine). The chain crosses the membrane as a helical span at residues Ile182 to Ser202. Over Ala203–Arg294 the chain is Cytoplasmic.

As to quaternary structure, interacts with SNAP25. Post-translationally, highly N- and O-glycosylated; contains sialic acid. As to expression, isoform 1 is highly expressed in testis. Isoform 2 is expressed at low levels in skin and blood.

The protein localises to the cytoplasmic vesicle. Its subcellular location is the secretory vesicle. It is found in the acrosome membrane. It localises to the acrosome inner membrane. The protein resides in the acrosome outer membrane. Acrosomal membrane-anchored protein involved in the process of fertilization and in acrosome biogenesis. This is Equatorin (EQTN) from Homo sapiens (Human).